We begin with the raw amino-acid sequence, 754 residues long: 5-methyltetrahydropteroyltriglutamate--homocysteine methyltransferase (754 aa).

5-methyltetrahydropteroyltri-L-glutamate is bound by residues 17–20 (RELK) and Lys-117. L-homocysteine-binding positions include 431-433 (IGS) and Glu-484. Residues 431 to 433 (IGS) and Glu-484 each bind L-methionine. Residues 515–516 (RC) and Trp-561 contribute to the 5-methyltetrahydropteroyltri-L-glutamate site. Residue Asp-599 participates in L-homocysteine binding. L-methionine is bound at residue Asp-599. 5-methyltetrahydropteroyltri-L-glutamate is bound at residue Glu-605. Zn(2+)-binding residues include His-641, Cys-643, and Glu-665. The active-site Proton donor is His-694. A Zn(2+)-binding site is contributed by Cys-726.

This sequence belongs to the vitamin-B12 independent methionine synthase family. Requires Zn(2+) as cofactor.

The enzyme catalyses 5-methyltetrahydropteroyltri-L-glutamate + L-homocysteine = tetrahydropteroyltri-L-glutamate + L-methionine. It functions in the pathway amino-acid biosynthesis; L-methionine biosynthesis via de novo pathway; L-methionine from L-homocysteine (MetE route): step 1/1. Its function is as follows. Catalyzes the transfer of a methyl group from 5-methyltetrahydrofolate to homocysteine resulting in methionine formation. The chain is 5-methyltetrahydropteroyltriglutamate--homocysteine methyltransferase from Pectobacterium atrosepticum (strain SCRI 1043 / ATCC BAA-672) (Erwinia carotovora subsp. atroseptica).